The sequence spans 414 residues: Serine hydroxymethyltransferase (414 aa).

(6S)-5,6,7,8-tetrahydrofolate is bound by residues L121 and 125–127; that span reads GHL. An N6-(pyridoxal phosphate)lysine modification is found at K229.

It belongs to the SHMT family. As to quaternary structure, homodimer. Pyridoxal 5'-phosphate is required as a cofactor.

It localises to the cytoplasm. The enzyme catalyses (6R)-5,10-methylene-5,6,7,8-tetrahydrofolate + glycine + H2O = (6S)-5,6,7,8-tetrahydrofolate + L-serine. Its pathway is one-carbon metabolism; tetrahydrofolate interconversion. The protein operates within amino-acid biosynthesis; glycine biosynthesis; glycine from L-serine: step 1/1. Its function is as follows. Catalyzes the reversible interconversion of serine and glycine with tetrahydrofolate (THF) serving as the one-carbon carrier. This reaction serves as the major source of one-carbon groups required for the biosynthesis of purines, thymidylate, methionine, and other important biomolecules. Also exhibits THF-independent aldolase activity toward beta-hydroxyamino acids, producing glycine and aldehydes, via a retro-aldol mechanism. The polypeptide is Serine hydroxymethyltransferase (Polynucleobacter asymbioticus (strain DSM 18221 / CIP 109841 / QLW-P1DMWA-1) (Polynucleobacter necessarius subsp. asymbioticus)).